The following is an 885-amino-acid chain: MSASTRNKHSKIHGNEKLDISNDEFDRIRDALKNEEFRKLFFDYVDEIQDPENRKIYEEEITQLEKERGVDVTFIHPQPGFVIKTSIDGELKCFINIASCKVVERPNNEVSVNSQTGQKGLSWSIPLAQIPPRDDLDANNKLCKVYDVVFHPDALHLAKRNAQFRQCLIDTALDGVEREYHVNLDRANLKFPKLDYKGMARPSVLRTLSKNPTAEEKEPHPLEHMYPKKPEADAGQSKVLPMKTKVTAVPKFAVPKYCIKHSHDVDMAEYTDELDAKLQVTVPRALVVEIELPLLSSTADCHLDVTEKSVYLLSEKQGAKYKLKVDLPYTVNDKAGNARFDTDHRCLRITLPVVRSTPREERNLHDTVRNLSREDSGVELNSNGESPVEDEELVVELSEHNQENDSNAFPPTAVVSPRSFLKSNLHYLLPAQFNCNILDNVIVFVLHVTNVQPDSVQTLQQARSLHLQFASMGTGYYPTHYAFLMQLPDGVQPELRIDQVEVDTGDENVVLRLTMNEHCMLLPSYLAGTDSNDLKEYPVFGHQNNNNEKETEVEVAEMEKCDLVSEKSLQINMDHNDVEHALEVTIEPQENEAPLDSLELLHEHQQELQQLHHQKKLNKKQRKRNKKQRSLSESACEDLKLAQEHHEQPMDTLKLPHRKQRSYSECNESSLGSSCVQRGILKRFSRYGPHPSISDSCSSIDDCSSTYSCSVDAAGTGFSQSFGSIPEERGGDEAGLSESCKKTVRFNDHIMKQVFRLDSSILGQRKKNQKRRDCKLRAQQRRLSEGDSADYVEVDSTHGSGDQPAHKTAANAQYFKQHNNNHPHVKDNKKQSLHDSGLDLTNGSINNKNNHSNENATKRNEADAKNTMMFEMDDVDEEAQDAANI.

Disordered stretches follow at residues 208 to 235 (LSKN…ADAG), 371 to 390 (LSRE…PVED), 607 to 636 (ELQQ…ESAC), 644 to 663 (EHHE…QRSY), 781 to 806 (RRLS…QPAH), and 819 to 871 (NNNH…MMFE). Residues 213 to 232 (TAEEKEPHPLEHMYPKKPEA) are compositionally biased toward basic and acidic residues. At Ser376 the chain carries Phosphoserine. A compositionally biased stretch (basic residues) spans 612 to 629 (HHQKKLNKKQRKRNKKQR). Ser784 carries the post-translational modification Phosphoserine. Basic and acidic residues predominate over residues 824 to 837 (HVKDNKKQSLHDSG). Positions 842–855 (NGSINNKNNHSNEN) are enriched in low complexity.

This sequence belongs to the PIH1 family. Kintoun subfamily. Interacts with Pp1alpha-96A, Pp1-87B, Pp1-13C and flw.

The protein resides in the cytoplasm. Its function is as follows. Required for cytoplasmic pre-assembly of axonemal dyneins, thereby playing a central role in motility in cilia and flagella. Involved in pre-assembly of dynein arm complexes in the cytoplasm before intraflagellar transport loads them for the ciliary compartment. The protein is Protein kintoun of Drosophila mojavensis (Fruit fly).